A 310-amino-acid polypeptide reads, in one-letter code: Probable manganese-dependent inorganic pyrophosphatase (310 aa).

The Mn(2+) site is built by His-9, Asp-13, Asp-15, Asp-75, His-97, and Asp-149.

Belongs to the PPase class C family. It depends on Mn(2+) as a cofactor.

The protein resides in the cytoplasm. It catalyses the reaction diphosphate + H2O = 2 phosphate + H(+). The chain is Probable manganese-dependent inorganic pyrophosphatase from Bacillus cytotoxicus (strain DSM 22905 / CIP 110041 / 391-98 / NVH 391-98).